Consider the following 469-residue polypeptide: Putative dipeptidase SE_1424 (469 aa).

His-84 provides a ligand contact to Zn(2+). Asp-86 is a catalytic residue. Asp-115 contributes to the Zn(2+) binding site. Glu-149 serves as the catalytic Proton acceptor. Zn(2+) is bound by residues Glu-150, Asp-173, and His-440.

This sequence belongs to the peptidase M20A family. Zn(2+) serves as cofactor.

This Staphylococcus epidermidis (strain ATCC 12228 / FDA PCI 1200) protein is Putative dipeptidase SE_1424.